We begin with the raw amino-acid sequence, 1029 residues long: uncharacterized protein (1029 aa).

Basic and acidic residues predominate over residues 1 to 23 (MREWCMLRESRTNTPRRAAERGK). Residues 1 to 31 (MREWCMLRESRTNTPRRAAERGKRPGGSSVR) form a disordered region. A Guanylate cyclase domain is found at 39–168 (TALCYDLVGS…AALAMAARLQ (130 aa)). ATP is bound at residue 261–268 (GDAGIGKS).

This is an uncharacterized protein from Rhizobium meliloti (strain 1021) (Ensifer meliloti).